A 151-amino-acid chain; its full sequence is Minor capsid protein P12 (151 aa).

Hydrophobic regions lie at residues 23–43 (FIFF…YTIY) and 46–66 (VQNT…IWNF). A disulfide bridge links Cys-112 with Cys-120.

As to quaternary structure, interacts with the major capsid protein.

The protein resides in the virion. In terms of biological role, one of the minor capsid proteins that constitute a network internal to the major capsid proteins and outside the lipid membrane. The minor capsid protein P12 does not serve a cross-linking function between neighboring capsomers, it may play a role in the viral capsid assembly. This Paramecium bursaria Chlorella virus 1 (PBCV-1) protein is Minor capsid protein P12.